The sequence spans 231 residues: LexA repressor (231 aa).

The segment at residues Arg-31–Gln-51 is a DNA-binding region (H-T-H motif). Residues Ser-148 and Lys-185 each act as for autocatalytic cleavage activity in the active site.

This sequence belongs to the peptidase S24 family. In terms of assembly, homodimer.

It carries out the reaction Hydrolysis of Ala-|-Gly bond in repressor LexA.. Functionally, represses a number of genes involved in the response to DNA damage (SOS response), including recA and lexA. In the presence of single-stranded DNA, RecA interacts with LexA causing an autocatalytic cleavage which disrupts the DNA-binding part of LexA, leading to derepression of the SOS regulon and eventually DNA repair. The polypeptide is LexA repressor (Leptothrix cholodnii (strain ATCC 51168 / LMG 8142 / SP-6) (Leptothrix discophora (strain SP-6))).